The following is an 840-amino-acid chain: Probable inorganic carbon transporter subunit DabA 2 (840 aa).

Zn(2+) contacts are provided by Cys-356, Asp-358, His-540, and Cys-555.

The protein belongs to the inorganic carbon transporter (TC 9.A.2) DabA family. Forms a complex with DabB. It depends on Zn(2+) as a cofactor.

The protein resides in the cell inner membrane. Part of an energy-coupled inorganic carbon pump. The chain is Probable inorganic carbon transporter subunit DabA 2 from Bradyrhizobium sp. (strain ORS 278).